Reading from the N-terminus, the 203-residue chain is DNA-binding transcriptional repressor ScoC (203 aa).

Residues 13–157 form the HTH marR-type domain; sequence ALVFTQKMAQ…MMCMIRHIYG (145 aa). Residues 63 to 86 constitute a DNA-binding region (H-T-H motif); it reads ISEIAKFGVMHVSTAFNFSKKLEE. The tract at residues 183–203 is disordered; it reads KKKAKDSAADEPAEELEPVNS. Over residues 191-203 the composition is skewed to acidic residues; it reads ADEPAEELEPVNS.

As to quaternary structure, homodimer. Interacts with SinR.

In terms of biological role, negative regulator of protease production and sporulation. Acts by binding directly to the promoter of protease genes (aprE and nprE), and by repressing oligopeptide permease operons (appABCDF and oppABCDF), thereby preventing uptake of oligopeptides required for initiation of sporulation. Acts with SinR as a corepressor of epr expression. Binds to non-m6A-5-methylated 5'-GACGAG-3' sites, tested with scpA; when the target is methylated by DnmA, this repressor no longer binds and transcription is up-regulated. This chain is DNA-binding transcriptional repressor ScoC, found in Bacillus subtilis (strain 168).